The sequence spans 216 residues: uncharacterized protein (216 aa).

This sequence belongs to the channel forming colicin family.

This is an uncharacterized protein from Escherichia coli.